The chain runs to 719 residues: Photosystem I P700 chlorophyll a apoprotein A1 (719 aa).

Helical transmembrane passes span 60–83 (IFSA…FHGA), 146–169 (LYCT…FHYH), 185–209 (LNHH…HVSL), 281–299 (TAHH…GHMY), 336–359 (WHAQ…HHMY), 375–401 (LSLF…IFMV), 423–445 (AIIS…LYIH), and 521–539 (FLVH…LILL). C563 and C572 together coordinate [4Fe-4S] cluster. Helical transmembrane passes span 579 to 600 (HVFL…HFSW) and 654 to 676 (LSAY…MFLF). H665 provides a ligand contact to chlorophyll a'. The chlorophyll a site is built by M673 and Y681. W682 serves as a coordination point for phylloquinone. Residues 714–719 (AVGVAH) form a helical membrane-spanning segment.

This sequence belongs to the PsaA/PsaB family. In terms of assembly, the PsaA/B heterodimer binds the P700 chlorophyll special pair and subsequent electron acceptors. PSI consists of a core antenna complex that captures photons, and an electron transfer chain that converts photonic excitation into a charge separation. The eukaryotic PSI reaction center is composed of at least 11 subunits. P700 is a chlorophyll a/chlorophyll a' dimer, A0 is one or more chlorophyll a, A1 is one or both phylloquinones and FX is a shared 4Fe-4S iron-sulfur center. is required as a cofactor.

The protein resides in the plastid. It is found in the chloroplast thylakoid membrane. It catalyses the reaction reduced [plastocyanin] + hnu + oxidized [2Fe-2S]-[ferredoxin] = oxidized [plastocyanin] + reduced [2Fe-2S]-[ferredoxin]. Functionally, psaA and PsaB bind P700, the primary electron donor of photosystem I (PSI), as well as the electron acceptors A0, A1 and FX. PSI is a plastocyanin-ferredoxin oxidoreductase, converting photonic excitation into a charge separation, which transfers an electron from the donor P700 chlorophyll pair to the spectroscopically characterized acceptors A0, A1, FX, FA and FB in turn. Oxidized P700 is reduced on the lumenal side of the thylakoid membrane by plastocyanin. The chain is Photosystem I P700 chlorophyll a apoprotein A1 from Equisetum palustre (Marsh horsetail).